Here is a 237-residue protein sequence, read N- to C-terminus: N-alpha-acetyltransferase 40 (237 aa).

Gly-2 is lipidated: N-myristoyl glycine. Residues 63–216 (SGLEPATVDW…EDCSYEILSR (154 aa)) form the N-acetyltransferase domain. Residues Tyr-85, 127 to 129 (DVE), and Tyr-138 contribute to the substrate site. Acetyl-CoA contacts are provided by residues 140–142 (VQL) and 148–153 (RKGLGK). Thr-174 contributes to the substrate binding site. Position 179 (Asn-179) interacts with acetyl-CoA. Substrate is bound by residues Ser-197 and Tyr-211.

This sequence belongs to the acetyltransferase family. NAA40 subfamily. Widely expressed; with the highest expression level in liver and the lowest expression in brain (at protein level).

It localises to the cytoplasm. Its subcellular location is the nucleus. The catalysed reaction is N-terminal L-seryl-[histone H4] + acetyl-CoA = N-terminal N(alpha)-acetyl-L-seryl-[histone H4] + CoA + H(+). The enzyme catalyses N-terminal L-seryl-[histone H2A] + acetyl-CoA = N-terminal N(alpha)-acetyl-L-seryl-[histone H2A] + CoA + H(+). In terms of biological role, N-alpha-acetyltransferase that specifically mediates the acetylation of the N-terminal residues of histones H4 and H2A. In contrast to other N-alpha-acetyltransferase, has a very specific selectivity for histones H4 and H2A N-terminus and specifically recognizes the 'Ser-Gly-Arg-Gly sequence'. Acts as a negative regulator of apoptosis. May play a role in hepatic lipid metabolism. The sequence is that of N-alpha-acetyltransferase 40 from Homo sapiens (Human).